A 123-amino-acid polypeptide reads, in one-letter code: Large ribosomal subunit protein uL18 (123 aa).

This sequence belongs to the universal ribosomal protein uL18 family. In terms of assembly, part of the 50S ribosomal subunit; part of the 5S rRNA/L5/L18/L25 subcomplex. Contacts the 5S and 23S rRNAs.

In terms of biological role, this is one of the proteins that bind and probably mediate the attachment of the 5S RNA into the large ribosomal subunit, where it forms part of the central protuberance. The sequence is that of Large ribosomal subunit protein uL18 from Chlamydia pneumoniae (Chlamydophila pneumoniae).